We begin with the raw amino-acid sequence, 212 residues long: Kynurenine formamidase (212 aa).

A substrate-binding site is contributed by W18. Positions 48, 52, and 54 each coordinate Zn(2+). The active-site Proton donor/acceptor is the H58. Residues H160 and E172 each coordinate Zn(2+).

The protein belongs to the Cyclase 1 superfamily. KynB family. In terms of assembly, homodimer. It depends on Zn(2+) as a cofactor.

The enzyme catalyses N-formyl-L-kynurenine + H2O = L-kynurenine + formate + H(+). The protein operates within amino-acid degradation; L-tryptophan degradation via kynurenine pathway; L-kynurenine from L-tryptophan: step 2/2. Its function is as follows. Catalyzes the hydrolysis of N-formyl-L-kynurenine to L-kynurenine, the second step in the kynurenine pathway of tryptophan degradation. The protein is Kynurenine formamidase of Paraburkholderia phytofirmans (strain DSM 17436 / LMG 22146 / PsJN) (Burkholderia phytofirmans).